The sequence spans 251 residues: 2,3-bisphosphoglycerate-dependent phosphoglycerate mutase (251 aa).

Residues 11–18 (RHGNSDWN), 24–25 (TG), Arg-63, 90–93 (ERHY), Lys-101, 117–118 (RR), and 185–186 (GN) each bind substrate. His-12 serves as the catalytic Tele-phosphohistidine intermediate. Catalysis depends on Glu-90, which acts as the Proton donor/acceptor. Residues 117 to 142 (RRSFDVPPPPIDDDDEYSQSRDPRYA) form a disordered region.

It belongs to the phosphoglycerate mutase family. BPG-dependent PGAM subfamily.

The catalysed reaction is (2R)-2-phosphoglycerate = (2R)-3-phosphoglycerate. The protein operates within carbohydrate degradation; glycolysis; pyruvate from D-glyceraldehyde 3-phosphate: step 3/5. Catalyzes the interconversion of 2-phosphoglycerate and 3-phosphoglycerate. This chain is 2,3-bisphosphoglycerate-dependent phosphoglycerate mutase, found in Clavibacter michiganensis subsp. michiganensis (strain NCPPB 382).